The sequence spans 1436 residues: Gag-Pol polyprotein (1436 aa).

The N-myristoyl glycine; by host moiety is linked to residue G2. An interaction with Gp41 region spans residues 7 to 31; that stretch reads VLSGGKLDAWEKIRLRPGGRKKYRL. The tract at residues 8–43 is interaction with host CALM1; it reads LSGGKLDAWEKIRLRPGGRKKYRLKHLVWASRELER. Positions 12-19 are interaction with host AP3D1; sequence KLDAWEKI. Positions 14-33 are interaction with membrane phosphatidylinositol 4,5-bisphosphate and RNA; that stretch reads DAWEKIRLRPGGRKKYRLKH. Residues 16-22 carry the Nuclear export signal motif; that stretch reads WEKIRLR. The Nuclear localization signal signature appears at 26–32; it reads RKKYRLK. Residues 73–77 form an interaction with membrane phosphatidylinositol 4,5-bisphosphate region; it reads EDLQS. Residues 110–129 form a disordered region; the sequence is KNKQRTQQAPAAADKEKDSK. At Y134 the chain carries Phosphotyrosine; by host. Residues 191-229 are interaction with human PPIA/CYPA and NUP153; it reads NTVGGHQAAMQMLKDTINEEAAEWDRLHPVHAGPIPPGQ. The interval 279 to 365 is dimerization/Multimerization of capsid protein p24; sequence YSPVSILDIK…GGPSHKARVL (87 aa). 2 CCHC-type zinc fingers span residues 393–410 and 414–431; these read VKCS…NCRA and KGCW…DCTG. Composition is skewed to basic and acidic residues over residues 447-457 and 464-475; these read KAREFPPEEAR and RELRVRRGDHPL. The segment at 447–482 is disordered; that stretch reads KAREFPPEEARANSPTSRELRVRRGDHPLSEAGAER. A dimerization of protease region spans residues 490–494; the sequence is PQITL. Residues 509–578 enclose the Peptidase A2 domain; that stretch reads KEALLDTGAD…TPVNIIGRNI (70 aa). The active-site For protease activity; shared with dimeric partner is the D514. 2 dimerization of protease regions span residues 538–544 and 577–589; these read GIGGFIK and NILT…LNLP. The Reverse transcriptase domain occupies 632–822; sequence EGKISKIGPE…PPFLWMGYEL (191 aa). Mg(2+) is bound by residues D698, D773, and D774. An RT 'primer grip' region spans residues 815–823; it reads FLWMGYELH. A Tryptophan repeat motif motif is present at residues 986–1002; it reads WETWWTEHWQATWIPEW. One can recognise an RNase H type-1 domain in the interval 1022-1145; the sequence is IEGAETYYVD…VDKLVSSGIR (124 aa). The Mg(2+) site is built by D1031, E1066, D1086, and D1137. The Integrase-type zinc finger occupies 1151–1192; the sequence is DGIDKAQVQHEKYHSNWRAMASDFNLPPIVAKEIVASCDKCQ. Zn(2+) contacts are provided by H1160, H1164, C1188, and C1191. In terms of domain architecture, Integrase catalytic spans 1202 to 1352; the sequence is VDCSPGIWQL…SARERIIDII (151 aa). The Mg(2+) site is built by D1212, D1264, and E1300. A DNA-binding region (integrase-type) is located at residues 1371–1418; that stretch reads FRVYYRDSRDPIWKGPAKLLWKGEGAVVIQDNSEIKVVPRRKAKIIRD.

As to quaternary structure, homotrimer; further assembles as hexamers of trimers. Interacts with gp41 (via C-terminus). Interacts with host CALM1; this interaction induces a conformational change in the Matrix protein, triggering exposure of the myristate group. Interacts with host AP3D1; this interaction allows the polyprotein trafficking to multivesicular bodies during virus assembly. Part of the pre-integration complex (PIC) which is composed of viral genome, matrix protein, Vpr and integrase. In terms of assembly, homodimer; the homodimer further multimerizes as homohexamers or homopentamers. Interacts with human PPIA/CYPA; This interaction stabilizes the capsid. Interacts with human NUP153. Interacts with host PDZD8; this interaction stabilizes the capsid. Interacts with monkey TRIM5; this interaction destabilizes the capsid. Homodimer, whose active site consists of two apposed aspartic acid residues. As to quaternary structure, heterodimer of p66 RT and p51 RT (RT p66/p51). Heterodimerization of RT is essential for DNA polymerase activity. The overall folding of the subdomains is similar in p66 RT and p51 RT but the spatial arrangements of the subdomains are dramatically different. In terms of assembly, homotetramer; may further associate as a homohexadecamer. Part of the pre-integration complex (PIC) which is composed of viral genome, matrix protein, Vpr and integrase. Interacts with human SMARCB1/INI1 and human PSIP1/LEDGF isoform 1. Interacts with human KPNA3; this interaction might play a role in nuclear import of the pre-integration complex. Interacts with human NUP153; this interaction might play a role in nuclear import of the pre-integration complex. Requires Mg(2+) as cofactor. Post-translationally, specific enzymatic cleavages by the viral protease yield mature proteins. The protease is released by autocatalytic cleavage. The polyprotein is cleaved during and after budding, this process is termed maturation. Proteolytic cleavage of p66 RT removes the RNase H domain to yield the p51 RT subunit. Nucleocapsid protein p7 might be further cleaved after virus entry. In terms of processing, tyrosine phosphorylated presumably in the virion by a host kinase. Phosphorylation is apparently not a major regulator of membrane association. Phosphorylated possibly by host MAPK1; this phosphorylation is necessary for Pin1-mediated virion uncoating. Post-translationally, methylated by host PRMT6, impairing its function by reducing RNA annealing and the initiation of reverse transcription.

The protein localises to the host cell membrane. The protein resides in the host endosome. Its subcellular location is the host multivesicular body. It is found in the virion membrane. It localises to the host nucleus. The protein localises to the host cytoplasm. The protein resides in the virion. It catalyses the reaction Specific for a P1 residue that is hydrophobic, and P1' variable, but often Pro.. It carries out the reaction Endohydrolysis of RNA in RNA/DNA hybrids. Three different cleavage modes: 1. sequence-specific internal cleavage of RNA. Human immunodeficiency virus type 1 and Moloney murine leukemia virus enzymes prefer to cleave the RNA strand one nucleotide away from the RNA-DNA junction. 2. RNA 5'-end directed cleavage 13-19 nucleotides from the RNA end. 3. DNA 3'-end directed cleavage 15-20 nucleotides away from the primer terminus.. The enzyme catalyses 3'-end directed exonucleolytic cleavage of viral RNA-DNA hybrid.. The catalysed reaction is DNA(n) + a 2'-deoxyribonucleoside 5'-triphosphate = DNA(n+1) + diphosphate. Its activity is regulated as follows. Protease: The viral protease is inhibited by many synthetic protease inhibitors (PIs), such as amprenavir, atazanavir, indinavir, loprinavir, nelfinavir, ritonavir and saquinavir. Use of protease inhibitors in tritherapy regimens permit more ambitious therapeutic strategies. Reverse transcriptase/ribonuclease H: RT can be inhibited either by nucleoside RT inhibitors (NRTIs) or by non nucleoside RT inhibitors (NNRTIs). NRTIs act as chain terminators, whereas NNRTIs inhibit DNA polymerization by binding a small hydrophobic pocket near the RT active site and inducing an allosteric change in this region. Classical NRTIs are abacavir, adefovir (PMEA), didanosine (ddI), lamivudine (3TC), stavudine (d4T), tenofovir (PMPA), zalcitabine (ddC), and zidovudine (AZT). Classical NNRTIs are atevirdine (BHAP U-87201E), delavirdine, efavirenz (DMP-266), emivirine (I-EBU), and nevirapine (BI-RG-587). The tritherapies used as a basic effective treatment of AIDS associate two NRTIs and one NNRTI. Functionally, mediates, with Gag polyprotein, the essential events in virion assembly, including binding the plasma membrane, making the protein-protein interactions necessary to create spherical particles, recruiting the viral Env proteins, and packaging the genomic RNA via direct interactions with the RNA packaging sequence (Psi). Gag-Pol polyprotein may regulate its own translation, by the binding genomic RNA in the 5'-UTR. At low concentration, the polyprotein would promote translation, whereas at high concentration, the polyprotein would encapsidate genomic RNA and then shut off translation. Targets the polyprotein to the plasma membrane via a multipartite membrane-binding signal, that includes its myristoylated N-terminus. Matrix protein is part of the pre-integration complex. Implicated in the release from host cell mediated by Vpu. Binds to RNA. Its function is as follows. Forms the conical core that encapsulates the genomic RNA-nucleocapsid complex in the virion. Most core are conical, with only 7% tubular. The core is constituted by capsid protein hexamer subunits. The core is disassembled soon after virion entry. Host restriction factors such as TRIM5-alpha or TRIMCyp bind retroviral capsids and cause premature capsid disassembly, leading to blocks in reverse transcription. Capsid restriction by TRIM5 is one of the factors which restricts HIV-1 to the human species. Host PIN1 apparently facilitates the virion uncoating. On the other hand, interactions with PDZD8 or CYPA stabilize the capsid. In terms of biological role, encapsulates and protects viral dimeric unspliced genomic RNA (gRNA). Binds these RNAs through its zinc fingers. Acts as a nucleic acid chaperone which is involved in rearangement of nucleic acid secondary structure during gRNA retrotranscription. Also facilitates template switch leading to recombination. As part of the polyprotein, participates in gRNA dimerization, packaging, tRNA incorporation and virion assembly. Functionally, aspartyl protease that mediates proteolytic cleavages of Gag and Gag-Pol polyproteins during or shortly after the release of the virion from the plasma membrane. Cleavages take place as an ordered, step-wise cascade to yield mature proteins. This process is called maturation. Displays maximal activity during the budding process just prior to particle release from the cell. Also cleaves Nef and Vif, probably concomitantly with viral structural proteins on maturation of virus particles. Hydrolyzes host EIF4GI and PABP1 in order to shut off the capped cellular mRNA translation. The resulting inhibition of cellular protein synthesis serves to ensure maximal viral gene expression and to evade host immune response. Also mediates cleavage of host YTHDF3. Mediates cleavage of host CARD8, thereby activating the CARD8 inflammasome, leading to the clearance of latent HIV-1 in patient CD4(+) T-cells after viral reactivation; in contrast, HIV-1 can evade CARD8-sensing when its protease remains inactive in infected cells prior to viral budding. Multifunctional enzyme that converts the viral RNA genome into dsDNA in the cytoplasm, shortly after virus entry into the cell. This enzyme displays a DNA polymerase activity that can copy either DNA or RNA templates, and a ribonuclease H (RNase H) activity that cleaves the RNA strand of RNA-DNA heteroduplexes in a partially processive 3' to 5' endonucleasic mode. Conversion of viral genomic RNA into dsDNA requires many steps. A tRNA(3)-Lys binds to the primer-binding site (PBS) situated at the 5'-end of the viral RNA. RT uses the 3' end of the tRNA primer to perform a short round of RNA-dependent minus-strand DNA synthesis. The reading proceeds through the U5 region and ends after the repeated (R) region which is present at both ends of viral RNA. The portion of the RNA-DNA heteroduplex is digested by the RNase H, resulting in a ssDNA product attached to the tRNA primer. This ssDNA/tRNA hybridizes with the identical R region situated at the 3' end of viral RNA. This template exchange, known as minus-strand DNA strong stop transfer, can be either intra- or intermolecular. RT uses the 3' end of this newly synthesized short ssDNA to perform the RNA-dependent minus-strand DNA synthesis of the whole template. RNase H digests the RNA template except for two polypurine tracts (PPTs) situated at the 5'-end and near the center of the genome. It is not clear if both polymerase and RNase H activities are simultaneous. RNase H probably can proceed both in a polymerase-dependent (RNA cut into small fragments by the same RT performing DNA synthesis) and a polymerase-independent mode (cleavage of remaining RNA fragments by free RTs). Secondly, RT performs DNA-directed plus-strand DNA synthesis using the PPTs that have not been removed by RNase H as primers. PPTs and tRNA primers are then removed by RNase H. The 3' and 5' ssDNA PBS regions hybridize to form a circular dsDNA intermediate. Strand displacement synthesis by RT to the PBS and PPT ends produces a blunt ended, linear dsDNA copy of the viral genome that includes long terminal repeats (LTRs) at both ends. Its function is as follows. Catalyzes viral DNA integration into the host chromosome, by performing a series of DNA cutting and joining reactions. This enzyme activity takes place after virion entry into a cell and reverse transcription of the RNA genome in dsDNA. The first step in the integration process is 3' processing. This step requires a complex comprising the viral genome, matrix protein, Vpr and integrase. This complex is called the pre-integration complex (PIC). The integrase protein removes 2 nucleotides from each 3' end of the viral DNA, leaving recessed CA OH's at the 3' ends. In the second step, the PIC enters cell nucleus. This process is mediated through integrase and Vpr proteins, and allows the virus to infect a non dividing cell. This ability to enter the nucleus is specific of lentiviruses, other retroviruses cannot and rely on cell division to access cell chromosomes. In the third step, termed strand transfer, the integrase protein joins the previously processed 3' ends to the 5' ends of strands of target cellular DNA at the site of integration. The 5'-ends are produced by integrase-catalyzed staggered cuts, 5 bp apart. A Y-shaped, gapped, recombination intermediate results, with the 5'-ends of the viral DNA strands and the 3' ends of target DNA strands remaining unjoined, flanking a gap of 5 bp. The last step is viral DNA integration into host chromosome. This involves host DNA repair synthesis in which the 5 bp gaps between the unjoined strands are filled in and then ligated. Since this process occurs at both cuts flanking the HIV genome, a 5 bp duplication of host DNA is produced at the ends of HIV-1 integration. Alternatively, Integrase may catalyze the excision of viral DNA just after strand transfer, this is termed disintegration. The chain is Gag-Pol polyprotein (gag-pol) from Human immunodeficiency virus type 1 group M subtype H (isolate VI991) (HIV-1).